Here is a 431-residue protein sequence, read N- to C-terminus: Tol-Pal system protein TolB (431 aa).

A signal peptide spans 1–26; sequence MSLMTKLGFRALVASCLIAAGSAANA. A disordered region spans residues 411–431; that stretch reads PQILSVQGGSVREPSWGPFMQ.

It belongs to the TolB family. The Tol-Pal system is composed of five core proteins: the inner membrane proteins TolA, TolQ and TolR, the periplasmic protein TolB and the outer membrane protein Pal. They form a network linking the inner and outer membranes and the peptidoglycan layer.

The protein localises to the periplasm. Its function is as follows. Part of the Tol-Pal system, which plays a role in outer membrane invagination during cell division and is important for maintaining outer membrane integrity. The protein is Tol-Pal system protein TolB of Burkholderia multivorans (strain ATCC 17616 / 249).